A 392-amino-acid chain; its full sequence is 8-amino-7-oxononanoate synthase (392 aa).

A substrate-binding site is contributed by arginine 19. Glycine 106–tyrosine 107 is a binding site for pyridoxal 5'-phosphate. Histidine 131 is a binding site for substrate. 3 residues coordinate pyridoxal 5'-phosphate: serine 176, histidine 204, and threonine 233. Lysine 236 is subject to N6-(pyridoxal phosphate)lysine. Threonine 350 serves as a coordination point for substrate.

It belongs to the class-II pyridoxal-phosphate-dependent aminotransferase family. BioF subfamily. As to quaternary structure, homodimer. Requires pyridoxal 5'-phosphate as cofactor.

It carries out the reaction 6-carboxyhexanoyl-[ACP] + L-alanine + H(+) = (8S)-8-amino-7-oxononanoate + holo-[ACP] + CO2. The protein operates within cofactor biosynthesis; biotin biosynthesis. In terms of biological role, catalyzes the decarboxylative condensation of pimeloyl-[acyl-carrier protein] and L-alanine to produce 8-amino-7-oxononanoate (AON), [acyl-carrier protein], and carbon dioxide. This Stutzerimonas stutzeri (strain A1501) (Pseudomonas stutzeri) protein is 8-amino-7-oxononanoate synthase.